The primary structure comprises 649 residues: V-type ATP synthase subunit I (649 aa).

A run of 7 helical transmembrane segments spans residues 312 to 332 (FLSF…GLIF), 360 to 380 (FMIL…FFGV), 455 to 475 (DNIL…LGML), 485 to 505 (IGWV…LQAV), 520 to 540 (GQVG…GGII), 556 to 576 (VFSD…GAMV), and 593 to 613 (VLII…GGVI).

Belongs to the V-ATPase 116 kDa subunit family.

It localises to the cell membrane. Functionally, produces ATP from ADP in the presence of a proton gradient across the membrane. In Chlamydia muridarum (strain MoPn / Nigg), this protein is V-type ATP synthase subunit I (atpI).